The following is a 159-amino-acid chain: Protein Smg homolog (159 aa).

The protein belongs to the Smg family.

The polypeptide is Protein Smg homolog (Vibrio campbellii (strain ATCC BAA-1116)).